A 156-amino-acid chain; its full sequence is Glycine cleavage system H protein 2, mitochondrial (156 aa).

A mitochondrion-targeting transit peptide spans 1 to 23; it reads MACRLFWASRVASHLRISVAQRG. The Lipoyl-binding domain maps to 47–129; it reads KATFGITDHA…YEQGWIIKVE (83 aa). At lysine 88 the chain carries N6-lipoyllysine. Serine 131 carries the phosphoserine modification.

The protein belongs to the GcvH family. As to quaternary structure, the glycine cleavage system is composed of four proteins: P, T, L and H. The cofactor is (R)-lipoate.

Its subcellular location is the mitochondrion. Functionally, the glycine decarboxylase (GDC) or glycine cleavage system catalyzes the degradation of glycine. The H protein shuttles the methylamine group of glycine from the P protein to the T protein. The polypeptide is Glycine cleavage system H protein 2, mitochondrial (GDH2) (Arabidopsis thaliana (Mouse-ear cress)).